A 525-amino-acid polypeptide reads, in one-letter code: GMP synthase [glutamine-hydrolyzing] (525 aa).

The region spanning Lys-8–Asn-207 is the Glutamine amidotransferase type-1 domain. The Nucleophile role is filled by Cys-85. Residues His-181 and Glu-183 contribute to the active site. The GMPS ATP-PPase domain maps to Trp-208 to Arg-400. Ser-235–Ser-241 contributes to the ATP binding site.

As to quaternary structure, homodimer.

It carries out the reaction XMP + L-glutamine + ATP + H2O = GMP + L-glutamate + AMP + diphosphate + 2 H(+). Its pathway is purine metabolism; GMP biosynthesis; GMP from XMP (L-Gln route): step 1/1. Its function is as follows. Catalyzes the synthesis of GMP from XMP. The protein is GMP synthase [glutamine-hydrolyzing] of Shewanella oneidensis (strain ATCC 700550 / JCM 31522 / CIP 106686 / LMG 19005 / NCIMB 14063 / MR-1).